A 308-amino-acid chain; its full sequence is GATA transcription factor 10 (308 aa).

A GATA-type zinc finger spans residues 214–268; it reads DGIVRICTHCETITTPQWRQGPSGPKTLCNACGVRFKSGRLVPEYRPASSPTFIP.

It belongs to the type IV zinc-finger family. Class A subfamily.

It localises to the nucleus. Transcriptional activator that specifically binds 5'-GATA-3' or 5'-GAT-3' motifs within gene promoters. May be involved in the regulation of some light-responsive genes. This is GATA transcription factor 10 (GATA10) from Arabidopsis thaliana (Mouse-ear cress).